A 1158-amino-acid polypeptide reads, in one-letter code: Protein transport protein Sec31B (1158 aa).

7 WD repeats span residues 4–47 (KELE…EIFE), 65–110 (VSSR…SSGK), 119–159 (KHTG…VPMT), 166–206 (NPPE…PIIK), 209–254 (SHSS…SPLK), 258–298 (SHSR…VVYK), and 301–341 (TQSS…WEAQ). A WD 8; interaction with SEC13 repeat occupies 376 to 407 (SFAFGGKLVTFGLPSIPVQPVAQACSRPVFIS). 3 disordered regions span residues 485–520 (LKSDSKSQESPQLEAVDLKSDRAHSPCAQASKHTAK), 797–843 (TSSY…SSDH), and 968–1010 (GPQD…PEPQ). Positions 822 to 840 (QPSSVMPFSPSQPSPSQGS) are enriched in low complexity.

It belongs to the WD repeat SEC31 family. In terms of assembly, COPII is composed of at least 5 proteins: the SEC23/24 complex, the SEC13/31 complex and SAR1. SEC13 and SEC31 make a 2:2 tetramer that forms the edge element of the COPII outer coat. The tetramer self-assembles in multiple copies to form the complete polyhedral cage. Interacts (via WD 8) with SEC13. Interacts with SEC31A. Monoubiquitinated by the BCR(KLHL12) E3 ubiquitin ligase complex, leading to regulate the size of COPII coats.

The protein resides in the cytoplasm. The protein localises to the cytoplasmic vesicle. It localises to the COPII-coated vesicle membrane. It is found in the endoplasmic reticulum membrane. As a component of the coat protein complex II (COPII), may function in vesicle budding and cargo export from the endoplasmic reticulum. The protein is Protein transport protein Sec31B (Sec31b) of Mus musculus (Mouse).